The following is a 728-amino-acid chain: MPRVVIVGSGMQYSYRVIDLLLTFFFYSGLYGLIAAKTYLQVTDPRYPSNQQCENTDDVPQSFQRPRDTRSTHDDTDLLLLESGSSLGGTWAEERLYPNLLSQNSEGLYEFSDMSLSEAMDGVDDEGQADRDTPVEDRFIPGWKLSRYLTAWSRKWNLPQYMRFNWQVKKISRLPTKEWELGIVIHPDQPSQTRHTTILCDKLILSPGLTSVPNILNFSPASGRPSAPAENVIHAKEVGPWCRDNLGYQPIPGQDAHPSPTKPSRVPRRVAIYGGAKSSFDLVHMFATLHLKDPSFHLKGLDATDSIEPVQVHWIIRDGGSGPAWMSPPRSNMPNGQSIASDKVASTRFVGVLSPCTPLVPKRLTLRRSSNFLGWKLAVEGSWLARLLHGNPIGRYFVRRFWKALDKSWGDFAGYDSAQHGGKMEHLRPTNSIIYCGAPLGIANQRGFWDAVRAPNVHIHRSAIESVSGDASSKGVIIDLADDTTLPLTDLLIQATGWKPNVPVEFTPPPLTLQLGLSCRVPRAILTPTNSAQDVKVDPEIKKLIHYWDGIDSVSASRIRRVFGPNSSPPKDVVESTTAPTDEFEFSPYRLFRRMVAPELVEEGDRSFVALGFVLTATTAVVAEVQALWAAAFLTGGLDDTRTHDALSINAMSRSDVDRDVSEDVVWGGLTGVGPGVDTLNYNDMLLRDLGLSPYRMGGGFINELTSVYTPKAYRGIVEEWKAKHGRP.

The chain crosses the membrane as a helical span at residues 17 to 37 (VIDLLLTFFFYSGLYGLIAAK). A compositionally biased stretch (polar residues) spans 50–64 (NQQCENTDDVPQSFQ). The disordered stretch occupies residues 50–72 (NQQCENTDDVPQSFQRPRDTRST). Val168 serves as a coordination point for FAD. 490 to 491 (DL) lines the NADP(+) pocket.

The protein belongs to the FAD-binding monooxygenase family. FAD is required as a cofactor.

The protein localises to the membrane. It participates in secondary metabolite metabolism. In terms of biological role, multifunctional FAD-dependent monooxygenase; part of the cluster that mediates the biosynthesis of a highly modified cyclo-arginine-tryptophan dipeptide (cRW). Within the pathway, avaB uses the avaA cyclo-arginine-tryptophan dipeptide (cRW) as substrate to generate the cyclo-Arg-formylkynurenine diketopiperazine (DKP). AvaB also catalyzes an additional N-oxidation of the avaC product which is followed by cyclization and dehydration. The first step of the pathway is perfornmed by the arginine-containing cyclodipeptide synthase (RCPDS) avaA that acts as the scaffold-generating enzyme and is responsible for formation of the cyclo-Arg-Trp (cRW) diketopiperazine. AvaB then acts as a multifunctional flavoenzyme that is responsible for generating the cyclo-Arg-formylkynurenine DKP, which can be deformylated by avaC. AvaB then further catalyzes an additional N-oxidation followed by cyclization and dehydration. The next step is an N-acetylation of the guanidine group catalyzed by the arginine N-acetyltransferase avaD. The roles of the additional enzymes identified within the ava cluster still have to be determined. This chain is FAD-dependent monooxygenase avaB, found in Aspergillus versicolor.